The following is a 518-amino-acid chain: Glutamate--cysteine ligase (518 aa).

This sequence belongs to the glutamate--cysteine ligase type 1 family. Type 1 subfamily.

The enzyme catalyses L-cysteine + L-glutamate + ATP = gamma-L-glutamyl-L-cysteine + ADP + phosphate + H(+). The protein operates within sulfur metabolism; glutathione biosynthesis; glutathione from L-cysteine and L-glutamate: step 1/2. The polypeptide is Glutamate--cysteine ligase (Shigella flexneri serotype 5b (strain 8401)).